The following is a 375-amino-acid chain: Growth/differentiation factor 8 (375 aa).

A signal peptide spans 1–23; the sequence is MQKLQLCVYIYLFMLIVAGPVDL. The propeptide occupies 24 to 266; it reads NENSEQKENV…VTDTPKRSRR (243 aa). Asn-71 is a glycosylation site (N-linked (GlcNAc...) asparagine). 4 cysteine pairs are disulfide-bonded: Cys-272-Cys-282, Cys-281-Cys-340, Cys-309-Cys-372, and Cys-313-Cys-374.

Belongs to the TGF-beta family. As to quaternary structure, homodimer; disulfide-linked. Interacts with WFIKKN2, leading to inhibit its activity. Interacts with FSTL3. Post-translationally, synthesized as large precursor molecule that undergoes proteolytic cleavage to generate an N-terminal propeptide and a disulfide linked C-terminal dimer, which is the biologically active molecule. The circulating form consists of a latent complex of the C-terminal dimer and other proteins, including its propeptide, which maintain the C-terminal dimer in a latent, inactive state. Ligand activation requires additional cleavage of the prodomain by a tolloid-like metalloproteinase.

It localises to the secreted. Acts specifically as a negative regulator of skeletal muscle growth. The sequence is that of Growth/differentiation factor 8 (MSTN) from Pan paniscus (Pygmy chimpanzee).